Reading from the N-terminus, the 886-residue chain is Alanine--tRNA ligase (886 aa).

Zn(2+) is bound by residues His564, His568, Cys676, and His680.

It belongs to the class-II aminoacyl-tRNA synthetase family. Zn(2+) is required as a cofactor.

Its subcellular location is the cytoplasm. The enzyme catalyses tRNA(Ala) + L-alanine + ATP = L-alanyl-tRNA(Ala) + AMP + diphosphate. Catalyzes the attachment of alanine to tRNA(Ala) in a two-step reaction: alanine is first activated by ATP to form Ala-AMP and then transferred to the acceptor end of tRNA(Ala). Also edits incorrectly charged Ser-tRNA(Ala) and Gly-tRNA(Ala) via its editing domain. The protein is Alanine--tRNA ligase of Bartonella bacilliformis.